We begin with the raw amino-acid sequence, 824 residues long: Translation initiation factor IF-2 (824 aa).

Disordered regions lie at residues 1–32 and 45–232; these read MSDTDGKKTLGLRGGAPRPGNVKQSFSHGRTK and VPKA…MGGQ. Positions 45-57 are enriched in low complexity; sequence VPKAGATTSAGGK. The segment covering 86–144 has biased composition (basic and acidic residues); it reads KAREAEEEAARIAEEKARAEERERRRAEQEERERAEREREESLKAKAEEDKRRKDEAEA. Low complexity predominate over residues 145-167; sequence AAKAAAAPAAEPVVQRPAAKAAP. The segment covering 170-193 has biased composition (basic and acidic residues); that stretch reads APRKQQDRDRDNKRGGKGNDDSRR. The region spanning 321-489 is the tr-type G domain; that stretch reads TRPPVVTIMG…AIALQAEILE (169 aa). A G1 region spans residues 330-337; the sequence is GHVDHGKT. Residue 330–337 participates in GTP binding; sequence GHVDHGKT. The tract at residues 355-359 is G2; it reads GITQH. Residues 377-380 form a G3 region; sequence DTPG. GTP contacts are provided by residues 377–381 and 431–434; these read DTPGH and NKID. The segment at 431–434 is G4; sequence NKID. The tract at residues 467–469 is G5; the sequence is SAI.

It belongs to the TRAFAC class translation factor GTPase superfamily. Classic translation factor GTPase family. IF-2 subfamily.

It localises to the cytoplasm. In terms of biological role, one of the essential components for the initiation of protein synthesis. Protects formylmethionyl-tRNA from spontaneous hydrolysis and promotes its binding to the 30S ribosomal subunits. Also involved in the hydrolysis of GTP during the formation of the 70S ribosomal complex. The protein is Translation initiation factor IF-2 of Roseobacter denitrificans (strain ATCC 33942 / OCh 114) (Erythrobacter sp. (strain OCh 114)).